The primary structure comprises 109 residues: Parvalbumin-7 (109 aa).

A2 bears the N-acetylalanine mark. EF-hand domains lie at 39–74 and 78–109; these read LSAD…FSAD and LTDK…LVHE. Ca(2+) is bound by residues D52, D54, S56, F58, E60, E63, D91, D93, D95, K97, and E102.

Belongs to the parvalbumin family.

Its function is as follows. In muscle, parvalbumin is thought to be involved in relaxation after contraction. It binds two calcium ions. The sequence is that of Parvalbumin-7 (pvalb7) from Danio rerio (Zebrafish).